A 526-amino-acid polypeptide reads, in one-letter code: Cytochrome P450 monooxygeanse terK (526 aa).

A helical transmembrane segment spans residues 21–43 (NWGQLTGALLFLAACTWIYLPAF). Cys465 serves as a coordination point for heme.

This sequence belongs to the cytochrome P450 family. Requires heme as cofactor.

The protein localises to the membrane. It functions in the pathway secondary metabolite biosynthesis. Cytochrome P450 monooxygeanse; part of the gene cluster that mediates the biosynthesis of terpendoles, indole-diterpene (IDT) mycotoxins including terpendole I, terpendole K, terpendole C, as well as the kinesin Eg5 inhibitor terpendole E. Terpendoles biosynthesis begins with the synthesis of geranylgeranyl diphosphate (GGPP) by a yet unidentified GGPP synthase. Condensation of indole-3-glycerol phosphate with GGPP by the prenyltransferase terC then forms 3-geranylgeranylindole (3-GGI), followed by epoxidation and cyclization of this intermediate (by the FAD-dependent monooxygeanse terM and the terpene cyclase terB) to form paspaline. The cytochrome monooxygenase terQ then hydroxylates paspalline at C-11 to yield terpendole E. The cytochrome monooxygenase terP converts terpendole E to 13-desoxyterpendole I, and terQ converts 13-desoxyterpendole I into terpendole I. TerF and terK are required for conversion of terpendole I to terpendole C which is further converted to terpendole K. This chain is Cytochrome P450 monooxygeanse terK, found in Tolypocladium album (Soil fungus).